The chain runs to 648 residues: Serine/threonine-protein phosphatase 1 regulatory subunit PIG1 (648 aa).

Over residues 20-51 (STSSFVSSTTSNSFSPLEDSTSASSSTSSSSS) the composition is skewed to low complexity. The disordered stretch occupies residues 20–52 (STSSFVSSTTSNSFSPLEDSTSASSSTSSSSSG). The 131-residue stretch at 201–331 (HSLELSDPVS…NNDYKNYEIT (131 aa)) folds into the CBM21 domain. The segment covering 593 to 609 (RESSSPEISPLNTTTSL) has biased composition (polar residues). The tract at residues 593–629 (RESSSPEISPLNTTTSLPFFPGDNMSDSSGEYEERTS) is disordered.

In terms of biological role, regulates the activity of glycogen synthase. It is most probably a regulatory subunit for protein phosphatase type 1. The chain is Serine/threonine-protein phosphatase 1 regulatory subunit PIG1 (PIG1) from Saccharomyces cerevisiae (strain ATCC 204508 / S288c) (Baker's yeast).